The following is a 163-amino-acid chain: 6,7-dimethyl-8-ribityllumazine synthase (163 aa).

5-amino-6-(D-ribitylamino)uracil contacts are provided by residues Phe22, 56–58 (TFE), and 80–82 (AVI). Residue 85–86 (GT) coordinates (2S)-2-hydroxy-3-oxobutyl phosphate. Catalysis depends on His88, which acts as the Proton donor. Residue Met113 coordinates 5-amino-6-(D-ribitylamino)uracil. Position 127 (Arg127) interacts with (2S)-2-hydroxy-3-oxobutyl phosphate.

The protein belongs to the DMRL synthase family.

It carries out the reaction (2S)-2-hydroxy-3-oxobutyl phosphate + 5-amino-6-(D-ribitylamino)uracil = 6,7-dimethyl-8-(1-D-ribityl)lumazine + phosphate + 2 H2O + H(+). Its pathway is cofactor biosynthesis; riboflavin biosynthesis; riboflavin from 2-hydroxy-3-oxobutyl phosphate and 5-amino-6-(D-ribitylamino)uracil: step 1/2. In terms of biological role, catalyzes the formation of 6,7-dimethyl-8-ribityllumazine by condensation of 5-amino-6-(D-ribitylamino)uracil with 3,4-dihydroxy-2-butanone 4-phosphate. This is the penultimate step in the biosynthesis of riboflavin. This Anaeromyxobacter sp. (strain Fw109-5) protein is 6,7-dimethyl-8-ribityllumazine synthase.